Consider the following 333-residue polypeptide: MDLINSTDYLINASTLVRNSTQFLAPASKMIIALSLYISSIIGTITNGLYLWVLRFKMKQTVNTLLFFHLILSYFISTMILPFMATSQLQDNHWNFGTALCKVFNGTLSLGMFTSVFFLSAIGLDRYLLTLHPVWSQQHRTPRWASSIVLGVWISAAALSIPYLIFRQTHHDRKGKVTCQNNYAVSTNWESKEMQALRQWIHVACFISRFLLGFLLPFFIIIFCYERVASKVKERSLFKSSKPFKVMMTAIISFFVCWMPYHIHQGLLLTMNQSLLLELTLILTVLTTSFNTIFSPTLYLFVGENFKKVFKKSILALFESTFSEDSSVERTQT.

Over 1–30 the chain is Extracellular; the sequence is MDLINSTDYLINASTLVRNSTQFLAPASKM. Asn-5, Asn-12, and Asn-19 each carry an N-linked (GlcNAc...) asparagine glycan. Residues 31–53 form a helical membrane-spanning segment; it reads IIALSLYISSIIGTITNGLYLWV. Topologically, residues 54–64 are cytoplasmic; sequence LRFKMKQTVNT. A helical membrane pass occupies residues 65 to 86; it reads LLFFHLILSYFISTMILPFMAT. Residues 87-103 are Extracellular-facing; the sequence is SQLQDNHWNFGTALCKV. A disulfide bond links Cys-101 and Cys-179. Residues 104–124 traverse the membrane as a helical segment; it reads FNGTLSLGMFTSVFFLSAIGL. Over 125 to 143 the chain is Cytoplasmic; the sequence is DRYLLTLHPVWSQQHRTPR. Residues 144–165 form a helical membrane-spanning segment; that stretch reads WASSIVLGVWISAAALSIPYLI. At 166-209 the chain is on the extracellular side; that stretch reads FRQTHHDRKGKVTCQNNYAVSTNWESKEMQALRQWIHVACFISR. Residues 210-230 form a helical membrane-spanning segment; the sequence is FLLGFLLPFFIIIFCYERVAS. The Cytoplasmic portion of the chain corresponds to 231–246; that stretch reads KVKERSLFKSSKPFKV. Residues 247 to 268 form a helical membrane-spanning segment; it reads MMTAIISFFVCWMPYHIHQGLL. Residues 269-283 lie on the Extracellular side of the membrane; it reads LTMNQSLLLELTLIL. N-linked (GlcNAc...) asparagine glycosylation occurs at Asn-272. Residues 284–303 traverse the membrane as a helical segment; sequence TVLTTSFNTIFSPTLYLFVG. Residues 304–333 lie on the Cytoplasmic side of the membrane; it reads ENFKKVFKKSILALFESTFSEDSSVERTQT.

It belongs to the G-protein coupled receptor 1 family.

Its subcellular location is the cell membrane. Orphan receptor; could be a chemoattractant receptor. The sequence is that of Probable G-protein coupled receptor 33 (GPR33) from Pan paniscus (Pygmy chimpanzee).